Reading from the N-terminus, the 80-residue chain is Small ribosomal subunit protein bS18 (80 aa).

Belongs to the bacterial ribosomal protein bS18 family. Part of the 30S ribosomal subunit. Forms a tight heterodimer with protein bS6.

Its function is as follows. Binds as a heterodimer with protein bS6 to the central domain of the 16S rRNA, where it helps stabilize the platform of the 30S subunit. The sequence is that of Small ribosomal subunit protein bS18 from Clostridium botulinum (strain 657 / Type Ba4).